A 144-amino-acid chain; its full sequence is Maximins 3/H16 (144 aa).

The N-terminal stretch at 1–18 (MNFKYIVAVSFLIASAYA) is a signal peptide. Propeptides lie at residues 19–43 (RSVQ…REIR) and 73–122 (RTAE…KKEK). Residue I143 is modified to Isoleucine amide.

It belongs to the bombinin family. Expressed by the skin glands.

It is found in the secreted. Maximin-3 shows antibacterial activity against both Gram-positive and Gram-negative bacteria. It also shows antimicrobial activity against the fungus C.albicans, but not against A.flavus nor P.uticale. It has little hemolytic activity. It possess a significant cytotoxicity against tumor cell lines. It possess a significant anti-HIV activity. It shows high spermicidal activity. Its function is as follows. Maximin-H16 shows antimicrobial activity against bacteria and against the fungus C.albicans. Shows strong hemolytic activity. This chain is Maximins 3/H16, found in Bombina maxima (Giant fire-bellied toad).